The sequence spans 597 residues: Probable translation initiation factor IF-2 (597 aa).

Residues 10-226 form the tr-type G domain; that stretch reads LRTPIVAVLG…LMGLSQRFMK (217 aa). Residues 19–26 form a G1 region; that stretch reads GHVDHGKT. Residue 19 to 26 participates in GTP binding; sequence GHVDHGKT. Residues 44–48 are G2; sequence AITQH. The G3 stretch occupies residues 81–84; the sequence is DTPG. GTP is bound by residues 81–85 and 135–138; these read DTPGH and NKVD. The G4 stretch occupies residues 135–138; the sequence is NKVD. The interval 203–205 is G5; it reads SAI.

It belongs to the TRAFAC class translation factor GTPase superfamily. Classic translation factor GTPase family. IF-2 subfamily.

Function in general translation initiation by promoting the binding of the formylmethionine-tRNA to ribosomes. Seems to function along with eIF-2. This is Probable translation initiation factor IF-2 from Halorubrum lacusprofundi (strain ATCC 49239 / DSM 5036 / JCM 8891 / ACAM 34).